The chain runs to 882 residues: DNA mismatch repair protein MutS (882 aa).

An ATP-binding site is contributed by 656-663; the sequence is GPNASGKS.

The protein belongs to the DNA mismatch repair MutS family.

Functionally, this protein is involved in the repair of mismatches in DNA. It is possible that it carries out the mismatch recognition step. This protein has a weak ATPase activity. This chain is DNA mismatch repair protein MutS, found in Synechococcus sp. (strain ATCC 27144 / PCC 6301 / SAUG 1402/1) (Anacystis nidulans).